Consider the following 449-residue polypeptide: Exodeoxyribonuclease 7 large subunit (449 aa).

It belongs to the XseA family. In terms of assembly, heterooligomer composed of large and small subunits.

It is found in the cytoplasm. It catalyses the reaction Exonucleolytic cleavage in either 5'- to 3'- or 3'- to 5'-direction to yield nucleoside 5'-phosphates.. Its function is as follows. Bidirectionally degrades single-stranded DNA into large acid-insoluble oligonucleotides, which are then degraded further into small acid-soluble oligonucleotides. This is Exodeoxyribonuclease 7 large subunit from Salmonella paratyphi B (strain ATCC BAA-1250 / SPB7).